A 303-amino-acid chain; its full sequence is UDP-3-O-acyl-N-acetylglucosamine deacetylase (303 aa).

Positions 78, 237, and 241 each coordinate Zn(2+). The Proton donor role is filled by H264.

The protein belongs to the LpxC family. Zn(2+) serves as cofactor.

It carries out the reaction a UDP-3-O-[(3R)-3-hydroxyacyl]-N-acetyl-alpha-D-glucosamine + H2O = a UDP-3-O-[(3R)-3-hydroxyacyl]-alpha-D-glucosamine + acetate. The protein operates within glycolipid biosynthesis; lipid IV(A) biosynthesis; lipid IV(A) from (3R)-3-hydroxytetradecanoyl-[acyl-carrier-protein] and UDP-N-acetyl-alpha-D-glucosamine: step 2/6. Catalyzes the hydrolysis of UDP-3-O-myristoyl-N-acetylglucosamine to form UDP-3-O-myristoylglucosamine and acetate, the committed step in lipid A biosynthesis. This is UDP-3-O-acyl-N-acetylglucosamine deacetylase from Stenotrophomonas maltophilia (strain R551-3).